The primary structure comprises 403 residues: DNA polymerase IV (403 aa).

In terms of domain architecture, UmuC spans 23–203 (IAHMDCDAFY…KPVNILPGVG (181 aa)). Positions 27 and 120 each coordinate Mg(2+). The active site involves glutamate 121.

This sequence belongs to the DNA polymerase type-Y family. As to quaternary structure, monomer. Mg(2+) is required as a cofactor.

The protein resides in the cytoplasm. It catalyses the reaction DNA(n) + a 2'-deoxyribonucleoside 5'-triphosphate = DNA(n+1) + diphosphate. Its function is as follows. Poorly processive, error-prone DNA polymerase involved in untargeted mutagenesis. Copies undamaged DNA at stalled replication forks, which arise in vivo from mismatched or misaligned primer ends. These misaligned primers can be extended by PolIV. Exhibits no 3'-5' exonuclease (proofreading) activity. May be involved in translesional synthesis, in conjunction with the beta clamp from PolIII. The chain is DNA polymerase IV from Caulobacter vibrioides (strain ATCC 19089 / CIP 103742 / CB 15) (Caulobacter crescentus).